The sequence spans 264 residues: Thymidylate synthase (264 aa).

Arg21 contacts dUMP. His51 is a (6R)-5,10-methylene-5,6,7,8-tetrahydrofolate binding site. 126 to 127 (RR) is a binding site for dUMP. Cys146 acts as the Nucleophile in catalysis. DUMP contacts are provided by residues 166-169 (RSCD), Asn177, and 207-209 (HLY). Residue Asp169 participates in (6R)-5,10-methylene-5,6,7,8-tetrahydrofolate binding. Ala263 provides a ligand contact to (6R)-5,10-methylene-5,6,7,8-tetrahydrofolate.

The protein belongs to the thymidylate synthase family. Bacterial-type ThyA subfamily. As to quaternary structure, homodimer.

The protein localises to the cytoplasm. The enzyme catalyses dUMP + (6R)-5,10-methylene-5,6,7,8-tetrahydrofolate = 7,8-dihydrofolate + dTMP. It functions in the pathway pyrimidine metabolism; dTTP biosynthesis. In terms of biological role, catalyzes the reductive methylation of 2'-deoxyuridine-5'-monophosphate (dUMP) to 2'-deoxythymidine-5'-monophosphate (dTMP) while utilizing 5,10-methylenetetrahydrofolate (mTHF) as the methyl donor and reductant in the reaction, yielding dihydrofolate (DHF) as a by-product. This enzymatic reaction provides an intracellular de novo source of dTMP, an essential precursor for DNA biosynthesis. The protein is Thymidylate synthase of Shewanella baltica (strain OS185).